The following is a 188-amino-acid chain: Gamma-glutamylcyclotransferase (188 aa).

19 to 22 (YFAY) provides a ligand contact to substrate. E98 serves as the catalytic Proton acceptor. S173 is subject to Phosphoserine.

Belongs to the gamma-glutamylcyclotransferase family. As to quaternary structure, homodimer.

It catalyses the reaction an alpha-(gamma-L-glutamyl)-L-amino acid = 5-oxo-L-proline + an L-alpha-amino acid. Catalyzes the formation of 5-oxoproline from gamma-glutamyl dipeptides and may play a significant role in glutathione homeostasis. Induces release of cytochrome c from mitochondria with resultant induction of apoptosis. In Mus musculus (Mouse), this protein is Gamma-glutamylcyclotransferase (Ggct).